We begin with the raw amino-acid sequence, 151 residues long: Deoxyuridine 5'-triphosphate nucleotidohydrolase (151 aa).

Substrate is bound by residues 70–72, Asn83, 87–89, and Met97; these read RSG and LID.

Belongs to the dUTPase family. Requires Mg(2+) as cofactor.

It carries out the reaction dUTP + H2O = dUMP + diphosphate + H(+). It functions in the pathway pyrimidine metabolism; dUMP biosynthesis; dUMP from dCTP (dUTP route): step 2/2. Its function is as follows. This enzyme is involved in nucleotide metabolism: it produces dUMP, the immediate precursor of thymidine nucleotides and it decreases the intracellular concentration of dUTP so that uracil cannot be incorporated into DNA. This chain is Deoxyuridine 5'-triphosphate nucleotidohydrolase, found in Pasteurella multocida (strain Pm70).